The following is a 240-amino-acid chain: Lactate utilization protein C (240 aa).

Belongs to the LutC/YkgG family.

Is involved in L-lactate degradation and allows cells to grow with lactate as the sole carbon source. The chain is Lactate utilization protein C from Bacillus licheniformis (strain ATCC 14580 / DSM 13 / JCM 2505 / CCUG 7422 / NBRC 12200 / NCIMB 9375 / NCTC 10341 / NRRL NRS-1264 / Gibson 46).